The primary structure comprises 340 residues: tRNA N6-adenosine threonylcarbamoyltransferase (340 aa).

Fe cation is bound by residues His-115 and His-119. Residues 137 to 141 (IVSGG), Asp-170, Gly-183, Asp-187, and Asn-276 contribute to the substrate site. Asp-304 provides a ligand contact to Fe cation.

Belongs to the KAE1 / TsaD family. The cofactor is Fe(2+).

The protein localises to the cytoplasm. It carries out the reaction L-threonylcarbamoyladenylate + adenosine(37) in tRNA = N(6)-L-threonylcarbamoyladenosine(37) in tRNA + AMP + H(+). Its function is as follows. Required for the formation of a threonylcarbamoyl group on adenosine at position 37 (t(6)A37) in tRNAs that read codons beginning with adenine. Is involved in the transfer of the threonylcarbamoyl moiety of threonylcarbamoyl-AMP (TC-AMP) to the N6 group of A37, together with TsaE and TsaB. TsaD likely plays a direct catalytic role in this reaction. In Staphylococcus epidermidis (strain ATCC 35984 / DSM 28319 / BCRC 17069 / CCUG 31568 / BM 3577 / RP62A), this protein is tRNA N6-adenosine threonylcarbamoyltransferase.